A 195-amino-acid polypeptide reads, in one-letter code: UPF0215 protein TK2033 (195 aa).

The protein belongs to the UPF0215 family.

This is UPF0215 protein TK2033 from Thermococcus kodakarensis (strain ATCC BAA-918 / JCM 12380 / KOD1) (Pyrococcus kodakaraensis (strain KOD1)).